A 73-amino-acid chain; its full sequence is N-terminal-borealin-like protein (73 aa).

Belongs to the borealin family. In terms of assembly, component of the aurora kinase complex composed of at least BIR1, BNL1, IPL1 and SLI15.

The protein resides in the nucleus. Its subcellular location is the cytoplasm. It is found in the cytoskeleton. The protein localises to the spindle. Its function is as follows. Component of the aurora kinase complex, also called chromosomal passenger complex (CPC), essential for chromosome segregation and metaphase chromosome alignment. Mediates the SLI15-BIR1 interaction within the CPC. The chain is N-terminal-borealin-like protein (NBL1) from Saccharomyces cerevisiae (strain ATCC 204508 / S288c) (Baker's yeast).